Consider the following 175-residue polypeptide: Early E1A protein (175 aa).

The tract at residues 40 to 48 (PSLHDLFDL) is interaction with RB1 in competition with E2F1. The LXCXE motif, interaction with host RB1 motif lies at 106-110 (LLCLE). A zinc finger lies at 146–164 (CLRCAYYQEQGENSICGLC).

The protein belongs to the adenoviridae E1A protein family. In terms of assembly, interacts with host UBE2I; this interaction interferes with polySUMOylation. Interacts with host RB1; this interaction induces the aberrant dissociation of RB1-E2F1 complex thereby disrupting the activity of RB1 and activating E2F1-regulated genes. Interacts with host ATF7; the interaction enhances ATF7-mediated viral transactivation activity which requires the zinc binding domains of both proteins. Isoform early E1A 32 kDa protein and isoform early E1A 26 kDa protein interact (via N-terminus) with CUL1 and E3 ubiquitin ligase RBX1; these interactions inhibit RBX1-CUL1-dependent elongation reaction of ubiquitin chains and attenuate ubiquitination of SCF(FBXW7) target proteins. Interacts (via PXLXP motif) with host ZMYND11/BS69 (via MYND-type zinc finger); this interaction inhibits E1A mediated transactivation. Interacts with host EP300; this interaction stimulates the acetylation of RB1 by recruiting EP300 and RB1 into a multimeric-protein complex. Interacts with host CTBP1 and CTBP2; this interaction seems to potentiate viral replication. Interacts with host DCAF7. Interacts with host DYRK1A. Interacts with host KPNA4; this interaction allows E1A import into the host nucleus. Interacts with host EP400; this interaction stabilizes MYC. Interacts with host TBP protein; this interaction probably disrupts the TBP-TATA complex.

The protein resides in the host nucleus. Plays a role in viral genome replication by driving entry of quiescent cells into the cell cycle. Stimulation of progression from G1 to S phase allows the virus to efficiently use the cellular DNA replicating machinery to achieve viral genome replication. E1A protein has both transforming and trans-activating activities. Induces the disassembly of the E2F1 transcription factor from RB1 by direct competition for the same binding site on RB1, with subsequent transcriptional activation of E2F1-regulated S-phase genes and of the E2 region of the adenoviral genome. Release of E2F1 leads to the ARF-mediated inhibition of MDM2 and causes TP53/p53 to accumulate because it is not targeted for degradation by MDM2-mediated ubiquitination anymore. This increase in TP53, in turn, would arrest the cell proliferation and direct its death but this effect is counteracted by the viral protein E1B-55K. Inactivation of the ability of RB1 to arrest the cell cycle is critical for cellular transformation, uncontrolled cellular growth and proliferation induced by viral infection. Interaction with RBX1 and CUL1 inhibits ubiquitination of the proteins targeted by SCF(FBXW7) ubiquitin ligase complex, and may be linked to unregulated host cell proliferation. The tumorigenesis-restraining activity of E1A may be related to the disruption of the host CtBP-CtIP complex through the CtBP binding motif. The sequence is that of Early E1A protein from Canis lupus familiaris (Dog).